The primary structure comprises 295 residues: Bifunctional protein FolD (295 aa).

NADP(+) is bound by residues 166 to 168, S191, and I232; that span reads GRS.

Belongs to the tetrahydrofolate dehydrogenase/cyclohydrolase family. Homodimer.

It catalyses the reaction (6R)-5,10-methylene-5,6,7,8-tetrahydrofolate + NADP(+) = (6R)-5,10-methenyltetrahydrofolate + NADPH. The enzyme catalyses (6R)-5,10-methenyltetrahydrofolate + H2O = (6R)-10-formyltetrahydrofolate + H(+). Its pathway is one-carbon metabolism; tetrahydrofolate interconversion. Catalyzes the oxidation of 5,10-methylenetetrahydrofolate to 5,10-methenyltetrahydrofolate and then the hydrolysis of 5,10-methenyltetrahydrofolate to 10-formyltetrahydrofolate. This is Bifunctional protein FolD from Rhodopseudomonas palustris (strain HaA2).